We begin with the raw amino-acid sequence, 237 residues long: MAKSKYEYVKQFESHDTLLPQCYIVVRIDGKKFHEFSKYYDFKKPNDERALKLMNACAKNVVLQYRHEMILAYGESDEYSFVLKKDTELYKRRRDKLSTLIVSLFTSNYVALWSKFFPGTNLHPKHLPFFDSRCVIYPNLETIRDYVTWRYVDTHINNLYNTAFWQLIQKCGMNPQEAEKRLSGTVSSEKNEILFKECGINYNNEPEMYKKGSLITNKGEILHINVIDSLDSLFEGY.

Positions 29, 30, and 77 each coordinate Mg(2+). Residues 29–34 (DGKKFH) and 76–77 (SD) contribute to the GTP site.

This sequence belongs to the tRNA(His) guanylyltransferase family. Requires Mg(2+) as cofactor.

The enzyme catalyses a 5'-end ribonucleotide-tRNA(His) + GTP + ATP + H2O = a 5'-end phospho-guanosine-ribonucleotide-tRNA(His) + AMP + 2 diphosphate + H(+). Functionally, adds a GMP to the 5'-end of tRNA(His) after transcription and RNase P cleavage. In Candida glabrata (strain ATCC 2001 / BCRC 20586 / JCM 3761 / NBRC 0622 / NRRL Y-65 / CBS 138) (Yeast), this protein is tRNA(His) guanylyltransferase (THG1).